Consider the following 339-residue polypeptide: Serine/threonine-protein kinase SAPK2 (339 aa).

The Protein kinase domain maps to 4–260 (YEVIKDIGSG…IPEIKNHPWF (257 aa)). ATP-binding positions include 10–18 (IGSGNFGVA) and lysine 33. The Proton acceptor role is filled by aspartate 123. The tract at residues 253–339 (EIKNHPWFLK…EDSGDFVCAL (87 aa)) is C-terminal.

The protein belongs to the protein kinase superfamily. Ser/Thr protein kinase family. Interacts with BZIP46. Interacts with ABI5 and PP2C30. Interacts with PP2C51. Phosphorylated. Expressed in leaf blades, leaf sheaths and roots. Expressed in shoots and roots of young seedlings.

It is found in the cytoplasm. Its subcellular location is the nucleus. It catalyses the reaction L-seryl-[protein] + ATP = O-phospho-L-seryl-[protein] + ADP + H(+). The catalysed reaction is L-threonyl-[protein] + ATP = O-phospho-L-threonyl-[protein] + ADP + H(+). Its activity is regulated as follows. Activated by phosphorylation in response to hyperosmotic stress within 5 minutes. Functionally, may play a role in signal transduction of hyperosmotic response. Can phosphorylate BZIP46 in vitro. Together with ABI5, PP2C30 and PYL5, is part of an abscisic acid (ABA) signaling unit that modulates seed germination and early seedling growth. In Oryza sativa subsp. japonica (Rice), this protein is Serine/threonine-protein kinase SAPK2 (SAPK2).